The primary structure comprises 671 residues: DNA ligase (671 aa).

NAD(+) is bound by residues D32–D36, S81–L82, and E113. The N6-AMP-lysine intermediate role is filled by K115. The NAD(+) site is built by R136, E173, K290, and K314. Zn(2+)-binding residues include C408, C411, C426, and C432. Residues E593–A671 enclose the BRCT domain.

It belongs to the NAD-dependent DNA ligase family. LigA subfamily. Mg(2+) serves as cofactor. Requires Mn(2+) as cofactor.

It carries out the reaction NAD(+) + (deoxyribonucleotide)n-3'-hydroxyl + 5'-phospho-(deoxyribonucleotide)m = (deoxyribonucleotide)n+m + AMP + beta-nicotinamide D-nucleotide.. DNA ligase that catalyzes the formation of phosphodiester linkages between 5'-phosphoryl and 3'-hydroxyl groups in double-stranded DNA using NAD as a coenzyme and as the energy source for the reaction. It is essential for DNA replication and repair of damaged DNA. The protein is DNA ligase of Salmonella paratyphi A (strain ATCC 9150 / SARB42).